Consider the following 561-residue polypeptide: Arginine--tRNA ligase (561 aa).

The 'HIGH' region motif lies at 108-118 (PNVAKEMHVGH).

The protein belongs to the class-I aminoacyl-tRNA synthetase family. In terms of assembly, monomer.

It localises to the cytoplasm. The catalysed reaction is tRNA(Arg) + L-arginine + ATP = L-arginyl-tRNA(Arg) + AMP + diphosphate. The protein is Arginine--tRNA ligase of Haemophilus ducreyi (strain 35000HP / ATCC 700724).